The sequence spans 315 residues: Prephenate dehydratase (315 aa).

One can recognise a Prephenate dehydratase domain in the interval 3 to 189 (RIAYLGPEGT…ARTRFLLIGV (187 aa)). Residues 203 to 280 (SVVLRIANVP…ADVRYLGSWP (78 aa)) form the ACT domain.

Homodimer.

The catalysed reaction is prephenate + H(+) = 3-phenylpyruvate + CO2 + H2O. It functions in the pathway amino-acid biosynthesis; L-phenylalanine biosynthesis; phenylpyruvate from prephenate: step 1/1. This chain is Prephenate dehydratase (pheA), found in Mycobacterium marinum (strain ATCC BAA-535 / M).